The following is a 61-amino-acid chain: SPbeta prophage-derived uncharacterized protein YotK (61 aa).

The stretch at 7 to 57 (SIQTLLNKMDRQMKTVKEAIEEKDLQRAHRNLINLADNNEELMQEIRWVKK) forms a coiled coil.

The polypeptide is SPbeta prophage-derived uncharacterized protein YotK (yotK) (Bacillus subtilis (strain 168)).